A 736-amino-acid polypeptide reads, in one-letter code: MANLAASTCLYSWLLVLLLSSVSAIIDEDTQVYIVYMGSLSSRADYIPTSDHMSILQQVTGESSIEGRLVRSYKRSFNGFAARLTESERTLIAEIEGVVSVFPNKILQLHTTTSWDFMGVKEGKNTKRNLAIESDTIIGVIDTGIWPESKSFSDKGFGPPPKKWKGVCSGGKNFTCNNKLIGARDYTSEGTRDTSGHGTHTASTAAGNAVKDTSFFGIGNGTVRGGVPASRIAAYKVCTDSGCSSEALLSSFDDAIADGVDLITISIGFQFPSIFEDDPIAIGAFHAMAKGILTVSSAGNSGPKPTTVSHVAPWIFTVAASTTNRGFITKVVLGNGKTLAGRSVNAFDMKGKKYPLVYGKSAASSACDAKTAALCAPACLNKSRVKGKILVCGGPSGYKIAKSVGAIAIIDKSPRPDVAFTHHLPASGLKAKDFKSLVSYIESQDSPQAAVLKTETIFNRTSPVIASFSSRGPNTIAVDILKPDITAPGVEILAAFSPNGEPSEDDTRRVKYSVFSGTSMACPHVAGVAAYVKTFYPRWSPSMIQSAIMTTAWPVKAKGRGIASTEFAYGAGHVDPMAALNPGLVYELDKADHIAFLCGMNYTSKTLKIISGDTVKCSKKNKILPRNLNYPSMSAKLSGTDSTFSVTFNRTLTNVGTPNSTYKSKVVAGHGSKLSIKVTPSVLYFKTVNEKQSFSVTVTGSDVDSEVPSSANLIWSDGTHNVRSPIVVYIMVVDEA.

An N-terminal signal peptide occupies residues 1–24 (MANLAASTCLYSWLLVLLLSSVSA). Residues 25–110 (IIDEDTQVYI…VFPNKILQLH (86 aa)) constitute a propeptide, activation peptide. Positions 32-110 (VYIVYMGSLS…VFPNKILQLH (79 aa)) constitute an Inhibitor I9 domain. Residues 114 to 580 (SWDFMGVKEG…AGHVDPMAAL (467 aa)) form the Peptidase S8 domain. The active-site Charge relay system is Asp-142. Residue Asn-173 is glycosylated (N-linked (GlcNAc...) asparagine). His-197 serves as the catalytic Charge relay system. Asn-220, Asn-381, and Asn-459 each carry an N-linked (GlcNAc...) asparagine glycan. In terms of domain architecture, PA spans 353–437 (KYPLVYGKSA…GLKAKDFKSL (85 aa)). Residue Ser-519 is the Charge relay system of the active site. N-linked (GlcNAc...) asparagine glycosylation is found at Asn-601, Asn-649, and Asn-659.

The protein belongs to the peptidase S8 family. The C-terminal propeptide is autocleaved. In terms of tissue distribution, specifically expressed in root stele of the root hair zone.

Its subcellular location is the secreted. The sequence is that of Subtilisin-like protease SBT4.12 from Arabidopsis thaliana (Mouse-ear cress).